We begin with the raw amino-acid sequence, 111 residues long: Secreted transmembrane peptide 5 (111 aa).

A signal peptide spans 1 to 46; the sequence is MRLSVFYIFITRLAMTKNATKNEMGSKSPNIVALVLPLLLILYTLS. The SCOOP motif motif lies at 66 to 79; the sequence is IVWTPHSNSCGGSP. Residues 72–74 carry the SxS motif essential for MIK2 binding motif; sequence SNS. Positions 89-111 are disordered; that stretch reads TTGRPCRRSRPPGTNIPVSDQSP.

Belongs to the serine rich endogenous peptide (SCOOP) phytocytokine family. As to quaternary structure, interacts with MIK2 (via extracellular leucine-rich repeat domain); this interaction triggers the formation of complex between MIK2 and the BAK1/SERK3 and SERK4 coreceptors, and subsequent BAK1 activation by phosphorylation. Mostly expressed in leaves, and, to a lower extent, in roots, stems, siliques, seeds and flowers.

It is found in the cell membrane. The protein resides in the secreted. The protein localises to the extracellular space. It localises to the apoplast. Brassicaceae-specific phytocytokine (plant endogenous peptide released into the apoplast) perceived by MIK2 in a BAK1/SERK3 and SERK4 coreceptors-dependent manner, that modulates various physiological and antimicrobial processes including growth prevention and reactive oxygen species (ROS) response regulation. The chain is Secreted transmembrane peptide 5 from Arabidopsis thaliana (Mouse-ear cress).